We begin with the raw amino-acid sequence, 1374 residues long: DNA-directed RNA polymerase subunit beta (1374 aa).

This sequence belongs to the RNA polymerase beta chain family. In terms of assembly, the RNAP catalytic core consists of 2 alpha, 1 beta, 1 beta' and 1 omega subunit. When a sigma factor is associated with the core the holoenzyme is formed, which can initiate transcription.

The catalysed reaction is RNA(n) + a ribonucleoside 5'-triphosphate = RNA(n+1) + diphosphate. Its function is as follows. DNA-dependent RNA polymerase catalyzes the transcription of DNA into RNA using the four ribonucleoside triphosphates as substrates. The chain is DNA-directed RNA polymerase subunit beta from Rhodopseudomonas palustris (strain BisB5).